The sequence spans 369 residues: UPF0324 membrane protein DVU_0543 (369 aa).

Transmembrane regions (helical) follow at residues 13–31, 46–65, 110–132, 142–164, 171–193, 240–262, 269–291, 306–328, and 341–363; these read IVPGLLVMVGTLYVLRTYV, WLVQVLSLNYILLSILTGMF, GGVAITLIVAFVFGTAIFIMWLG, TATMAAACGVCGVSAAVATAPGV, LALSIATILGFGIMTMFVSPFIG, WNVVRVICIPFVVFFITAWYWKG, TSLGSILASKFPIFVLGFVGMTA, LHLMRDVMAWIFGVGLVGLGAYI, and LRIGLIAGMVKYILALIIILAFI.

It belongs to the UPF0324 family.

It is found in the cell membrane. This chain is UPF0324 membrane protein DVU_0543, found in Nitratidesulfovibrio vulgaris (strain ATCC 29579 / DSM 644 / CCUG 34227 / NCIMB 8303 / VKM B-1760 / Hildenborough) (Desulfovibrio vulgaris).